Reading from the N-terminus, the 202-residue chain is UPF0301 protein mlr7511 (202 aa).

Belongs to the UPF0301 (AlgH) family.

The protein is UPF0301 protein mlr7511 of Mesorhizobium japonicum (strain LMG 29417 / CECT 9101 / MAFF 303099) (Mesorhizobium loti (strain MAFF 303099)).